The primary structure comprises 374 residues: Chaperone protein DnaJ (374 aa).

The J domain occupies 5 to 70; the sequence is DYYEVLGVER…SKRAAFDQYG (66 aa). The segment at 133-211 adopts a CR-type zinc-finger fold; sequence GTTVSIRVPT…CHGEGRVEEY (79 aa). Residues cysteine 146, cysteine 149, cysteine 163, cysteine 166, cysteine 185, cysteine 188, cysteine 199, and cysteine 202 each contribute to the Zn(2+) site. 4 CXXCXGXG motif repeats span residues 146 to 153, 163 to 170, 185 to 192, and 199 to 206; these read CQPCDGSG, CPTCGGIG, CPRCHGQG, and CTSCHGEG.

It belongs to the DnaJ family. As to quaternary structure, homodimer. Zn(2+) serves as cofactor.

Its subcellular location is the cytoplasm. Participates actively in the response to hyperosmotic and heat shock by preventing the aggregation of stress-denatured proteins and by disaggregating proteins, also in an autonomous, DnaK-independent fashion. Unfolded proteins bind initially to DnaJ; upon interaction with the DnaJ-bound protein, DnaK hydrolyzes its bound ATP, resulting in the formation of a stable complex. GrpE releases ADP from DnaK; ATP binding to DnaK triggers the release of the substrate protein, thus completing the reaction cycle. Several rounds of ATP-dependent interactions between DnaJ, DnaK and GrpE are required for fully efficient folding. Also involved, together with DnaK and GrpE, in the DNA replication of plasmids through activation of initiation proteins. The chain is Chaperone protein DnaJ from Pseudomonas putida (strain ATCC 700007 / DSM 6899 / JCM 31910 / BCRC 17059 / LMG 24140 / F1).